Reading from the N-terminus, the 192-residue chain is Ion-translocating oxidoreductase complex subunit A (192 aa).

Helical transmembrane passes span 5 to 25 (LLLLVGTVLVNNFVLVKFLGL), 39 to 59 (IGMSMATTFVLTLASILSYLV), 65 to 85 (LPFDLGYLRTMSFILVIAVVV), 102 to 122 (ALGIYLPLITTNCAVLGVALL), 134 to 154 (AIFGFGAAVGFSLVLILFSAM), and 171 to 191 (AIAMVTAGLMSLAFMGFTGLV).

Belongs to the NqrDE/RnfAE family. As to quaternary structure, the complex is composed of six subunits: RnfA, RnfB, RnfC, RnfD, RnfE and RnfG.

The protein localises to the cell inner membrane. In terms of biological role, part of a membrane-bound complex that couples electron transfer with translocation of ions across the membrane. The sequence is that of Ion-translocating oxidoreductase complex subunit A from Shewanella piezotolerans (strain WP3 / JCM 13877).